We begin with the raw amino-acid sequence, 543 residues long: Organic anion transporter 3 (543 aa).

Topologically, residues 1 to 21 (MTFAELVDRVGSKGPFQLLHT) are cytoplasmic. The helical transmembrane segment at 22-42 (VLLGLPILGMANHNLLQIFTA) threads the bilayer. The Extracellular segment spans residues 43–124 (PTPAHHCRPP…LVCSSSKLKE (82 aa)). A glycan (N-linked (GlcNAc...) asparagine) is linked at Asn81. The chain crosses the membrane as a helical span at residues 125–145 (MAQSVFMAGILVGGLVLGALS). Topologically, residues 146-151 (DRFGRK) are cytoplasmic. The helical transmembrane segment at 152-172 (PILIFSYLLLGASGSGAAFSP) threads the bilayer. At 173–181 (TFSIYAVFR) the chain is on the extracellular side. Residues 182–202 (FLCGFSISGISLSTAILNVEW) form a helical membrane-spanning segment. Over 203–212 (VSTRFRAIKS) the chain is Cytoplasmic. Residues 213-233 (IAVGFFYTFGQFILPGLAYAI) form a helical membrane-spanning segment. Over 234–237 (PQWR) the chain is Extracellular. A helical membrane pass occupies residues 238 to 258 (WLQLTVSVPFLTFFLLSWWLP). Residues 259-328 (ESIRWMVLSG…FRTPVLRRVT (70 aa)) are Cytoplasmic-facing. A helical transmembrane segment spans residues 329–349 (LCLSLAWFATGFAYYSLAMGV). At 350 to 355 (EEFGVN) the chain is on the extracellular side. The helical transmembrane segment at 356–376 (LYVLQLIFGGVDVPAKFITML) threads the bilayer. Topologically, residues 377–388 (SISYLGRHITEG) are cytoplasmic. Residues 389-409 (IVLLLAGGCILALIFVPLDLM) traverse the membrane as a helical segment. Topologically, residues 410–412 (TLR) are extracellular. A helical transmembrane segment spans residues 413 to 433 (TVLAVFGKGCLSGSFSCLFLY). Residues 434–472 (TSELYPTVIRQTGMGASNLWARVGSMTAPLVKITGELQP) are Cytoplasmic-facing. A helical membrane pass occupies residues 473 to 493 (FIPNIIFGTIALLGGSAALFL). The Extracellular segment spans residues 494 to 543 (PETLNRPLPETIEDIETWSLRAKEPKPEPEAEKSSQRIPLQPCEPGPGPS). Residues 513 to 543 (LRAKEPKPEPEAEKSSQRIPLQPCEPGPGPS) are disordered. Over residues 514–528 (RAKEPKPEPEAEKSS) the composition is skewed to basic and acidic residues.

The protein belongs to the major facilitator (TC 2.A.1) superfamily. Organic cation transporter (TC 2.A.1.19) family. In terms of tissue distribution, expressed in kidney.

It is found in the basolateral cell membrane. It catalyses the reaction estrone 3-sulfate(out) + glutarate(in) = estrone 3-sulfate(in) + glutarate(out). The catalysed reaction is estrone 3-sulfate(in) + 2-oxoglutarate(out) = estrone 3-sulfate(out) + 2-oxoglutarate(in). The enzyme catalyses glutarate(in) + 2-oxoglutarate(out) = glutarate(out) + 2-oxoglutarate(in). It carries out the reaction urate(in) + 2-oxoglutarate(out) = urate(out) + 2-oxoglutarate(in). It catalyses the reaction taurocholate(out) + glutarate(in) = taurocholate(in) + glutarate(out). The catalysed reaction is dehydroepiandrosterone 3-sulfate(out) + glutarate(in) = dehydroepiandrosterone 3-sulfate(in) + glutarate(out). The enzyme catalyses prostaglandin F2alpha(out) + glutarate(in) = prostaglandin F2alpha(in) + glutarate(out). It carries out the reaction prostaglandin F2alpha(out) + 2-oxoglutarate(in) = prostaglandin F2alpha(in) + 2-oxoglutarate(out). It catalyses the reaction (R)-carnitine(out) + 2-oxoglutarate(in) = (R)-carnitine(in) + 2-oxoglutarate(out). The catalysed reaction is glutarate(in) + (R)-carnitine(out) = glutarate(out) + (R)-carnitine(in). The enzyme catalyses prostaglandin E2(out) + 2-oxoglutarate(in) = prostaglandin E2(in) + 2-oxoglutarate(out). It carries out the reaction prostaglandin E2(out) + glutarate(in) = prostaglandin E2(in) + glutarate(out). It catalyses the reaction urate(in) + glutarate(out) = urate(out) + glutarate(in). The catalysed reaction is taurocholate(out) + 2-oxoglutarate(in) = taurocholate(in) + 2-oxoglutarate(out). The enzyme catalyses dehydroepiandrosterone 3-sulfate(out) + 2-oxoglutarate(in) = dehydroepiandrosterone 3-sulfate(in) + 2-oxoglutarate(out). It carries out the reaction kynurenate(out) + a dicarboxylate(in) = kynurenate(in) + a dicarboxylate(out). It catalyses the reaction (indol-3-yl)acetate(out) + a dicarboxylate(in) = (indol-3-yl)acetate(in) + a dicarboxylate(out). The catalysed reaction is indoxyl sulfate(out) + a dicarboxylate(in) = indoxyl sulfate(in) + a dicarboxylate(out). The enzyme catalyses N-benzoylglycine(out) + a dicarboxylate(in) = N-benzoylglycine(in) + a dicarboxylate(out). It carries out the reaction 3-carboxy-4-methyl-5-propyl-2-furanpropanoate(out) + a dicarboxylate(in) = 3-carboxy-4-methyl-5-propyl-2-furanpropanoate(in) + a dicarboxylate(out). It catalyses the reaction (6R)-L-erythro-5,6,7,8-tetrahydrobiopterin(out) + a dicarboxylate(in) = (6R)-L-erythro-5,6,7,8-tetrahydrobiopterin(in) + a dicarboxylate(out). The catalysed reaction is L-erythro-7,8-dihydrobiopterin(out) + a dicarboxylate(in) = L-erythro-7,8-dihydrobiopterin(in) + a dicarboxylate(out). The enzyme catalyses L-sepiapterin(out) + a dicarboxylate(in) = L-sepiapterin(in) + a dicarboxylate(out). Its function is as follows. Functions as an organic anion/dicarboxylate exchanger that couples organic anion uptake indirectly to the sodium gradient. Transports organic anions such as estrone 3-sulfate (E1S) and urate in exchange for dicarboxylates such as glutarate or ketoglutarate (2-oxoglutarate). Plays an important role in the excretion of endogenous and exogenous organic anions, especially from the kidney and the brain. E1S transport is pH- and chloride-dependent and may also involve E1S/cGMP exchange. Responsible for the transport of prostaglandin E2 (PGE2) and prostaglandin F2(alpha) (PGF2(alpha)) in the basolateral side of the renal tubule. Involved in the transport of neuroactive tryptophan metabolites kynurenate and xanthurenate. Functions as a biopterin transporters involved in the uptake and the secretion of coenzymes tetrahydrobiopterin (BH4), dihydrobiopterin (BH2) and sepiapterin to urine, thereby determining baseline levels of blood biopterins. May be involved in the basolateral transport of steviol, a metabolite of the popular sugar substitute stevioside. May participate in the detoxification/ renal excretion of drugs and xenobiotics, such as the histamine H(2)-receptor antagonists fexofenadine and cimetidine, the antibiotic benzylpenicillin (PCG), the anionic herbicide 2,4-dichloro-phenoxyacetate (2,4-D), the diagnostic agent p-aminohippurate (PAH), the antiviral acyclovir (ACV), and the mycotoxin ochratoxin (OTA), by transporting these exogenous organic anions across the cell membrane in exchange for dicarboxylates such as 2-oxoglutarate. Contributes to the renal uptake of potent uremic toxins (indoxyl sulfate (IS), indole acetate (IA), hippurate/N-benzoylglycine (HA) and 3-carboxy-4-methyl-5-propyl-2-furanpropionate (CMPF)), pravastatin, PCG, E1S and dehydroepiandrosterone sulfate (DHEAS), and is partly involved in the renal uptake of temocaprilat (an angiotensin-converting enzyme (ACE) inhibitor). May contribute to the release of cortisol in the adrenals. Involved in one of the detoxification systems on the choroid plexus (CP), removes substrates such as E1S or taurocholate (TC), PCG, 2,4-D and PAH, from the cerebrospinal fluid (CSF) to the blood for eventual excretion in urine and bile. Also contributes to the uptake of several other organic compounds such as the prostanoids prostaglandin E(2) and prostaglandin F(2-alpha), L-carnitine, and the therapeutic drugs allopurinol, 6-mercaptopurine (6-MP) and 5-fluorouracil (5-FU). Mediates the transport of PAH, PCG, and the statins pravastatin and pitavastatin, from the cerebrum into the blood circulation across the blood-brain barrier (BBB). In summary, plays a role in the efflux of drugs and xenobiotics, helping reduce their undesired toxicological effects on the body. This chain is Organic anion transporter 3 (SLC22A8), found in Sus scrofa (Pig).